The primary structure comprises 429 residues: [LysW]-aminoadipate semialdehyde transaminase (429 aa).

Pyridoxal 5'-phosphate-binding positions include 112 to 113 (GT) and Phe139. Arg142 contacts substrate. Residue 226 to 229 (DEIQ) coordinates pyridoxal 5'-phosphate. Lys255 carries the N6-(pyridoxal phosphate)lysine modification. A substrate-binding site is contributed by Thr283. Residue Thr284 coordinates pyridoxal 5'-phosphate. The tract at residues 408 to 429 (LRAQQSEMGQQQVSQGESVQTE) is disordered. Low complexity predominate over residues 411–429 (QQSEMGQQQVSQGESVQTE).

It belongs to the class-III pyridoxal-phosphate-dependent aminotransferase family. LysJ subfamily. Homodimer. Pyridoxal 5'-phosphate serves as cofactor.

Its subcellular location is the cytoplasm. The enzyme catalyses [amino-group carrier protein]-C-terminal-gamma-(L-lysyl)-L-glutamate + 2-oxoglutarate = [amino-group carrier protein]-C-terminal-N-(1-carboxy-5-oxopentan-1-yl)-L-glutamine + L-glutamate. The protein operates within amino-acid biosynthesis; L-lysine biosynthesis via AAA pathway; L-lysine from L-alpha-aminoadipate (Thermus route): step 4/5. Catalyzes the transfer of the amino group of L-glutamate to [LysW]-aminoadipate 6-semialdehyde, generating [LysW]-gamma-L-lysine. The sequence is that of [LysW]-aminoadipate semialdehyde transaminase from Deinococcus radiodurans (strain ATCC 13939 / DSM 20539 / JCM 16871 / CCUG 27074 / LMG 4051 / NBRC 15346 / NCIMB 9279 / VKM B-1422 / R1).